We begin with the raw amino-acid sequence, 332 residues long: Mitoferrin-1 (332 aa).

Solcar repeat units follow at residues 31 to 119, 129 to 213, and 220 to 314; these read ASLG…IKRS, NSHI…MQEH, and YRPE…FKYF. The next 6 membrane-spanning stretches (helical) occupy residues 33 to 52, 94 to 113, 131 to 150, 188 to 207, 222 to 241, and 289 to 308; these read LGTH…TVMY, GLNI…FACY, HIAN…AVMN, SYST…FITY, PETH…AVTT, and GIQA…WSVY.

This sequence belongs to the mitochondrial carrier (TC 2.A.29) family. As to expression, highly expressed in hematopoietic organs, Expressed in the intermediate cell mass (ICM), a tissue equivalent to the mammalian extraembryonic yolk-sac blood islands. Colocalizes with gata1.

The protein resides in the mitochondrion inner membrane. It catalyses the reaction Fe(2+)(in) = Fe(2+)(out). Its function is as follows. Mitochondrial iron transporter that specifically mediates iron uptake in developing erythroid cells, thereby playing an essential role in heme biosynthesis. The sequence is that of Mitoferrin-1 (slc25a37) from Danio rerio (Zebrafish).